The chain runs to 167 residues: Ribosome maturation factor RimP (167 aa).

The protein belongs to the RimP family.

Its subcellular location is the cytoplasm. In terms of biological role, required for maturation of 30S ribosomal subunits. In Cytophaga hutchinsonii (strain ATCC 33406 / DSM 1761 / CIP 103989 / NBRC 15051 / NCIMB 9469 / D465), this protein is Ribosome maturation factor RimP.